The following is a 290-amino-acid chain: ADP-ribosylation factor-like protein 13A (290 aa).

GTP-binding positions include 28–35 (GLNNSGKT), 71–75 (DLNGD), and 130–133 (NKQD). A disordered region spans residues 204 to 226 (SKNNTGSGERCSSHSFSTRTGMS).

This sequence belongs to the small GTPase superfamily. Arf family.

The polypeptide is ADP-ribosylation factor-like protein 13A (ARL13A) (Homo sapiens (Human)).